The sequence spans 539 residues: G protein-coupled receptor associated sorting protein 3 (539 aa).

Over residues 1-10 the composition is skewed to basic residues; it reads MTGSKNKARA. Disordered regions lie at residues 1–112 and 134–172; these read MTGS…NWFW and VAKC…EENV. Composition is skewed to basic and acidic residues over residues 66–80 and 88–106; these read VVAE…ESKA and FNHR…DKPS. Residues 134 to 146 show a composition bias toward polar residues; it reads VAKCENKPSTSIQ.

The protein belongs to the GPRASP family. Homodimer.

Its subcellular location is the cytoplasm. The protein localises to the nucleus. Its function is as follows. Survival and differentiation promoting protein that plays a role in the regulation of neurosynaptogenesis. Induces phosphatase PP2A activity which results in APP dephosphorylation and inhibits BACE1-mediated processing of APP. The protein is G protein-coupled receptor associated sorting protein 3 (Gprasp3) of Mus musculus (Mouse).